Here is a 374-residue protein sequence, read N- to C-terminus: Coiled-coil domain-containing protein 89 (374 aa).

The tract at residues 1–38 is disordered; the sequence is MRAPMPQKEQAPRMDTSPPEERLEKQNEKLNNQEEEME. The residue at position 16 (Thr-16) is a Phosphothreonine. The span at 19 to 32 shows a compositional bias: basic and acidic residues; it reads PEERLEKQNEKLNN. The stretch at 19–350 forms a coiled coil; it reads PEERLEKQNE…YDELRLQSEA (332 aa).

Belongs to the CCDC89 family. In terms of assembly, interacts with HEY1.

It is found in the cytoplasm. The protein resides in the nucleus. The sequence is that of Coiled-coil domain-containing protein 89 (CCDC89) from Macaca fascicularis (Crab-eating macaque).